Here is a 440-residue protein sequence, read N- to C-terminus: Gamma-aminobutyric acid receptor subunit pi (440 aa).

An N-terminal signal peptide occupies residues 1–23 (MKRSLHLTFVCLSLFSARMCVQG). Topologically, residues 24 to 241 (NQFNIEVSRS…LVLQFELQRN (218 aa)) are extracellular. N-linked (GlcNAc...) asparagine glycans are attached at residues N43, N102, and N145. A disulfide bond links C160 and C174. 2 N-linked (GlcNAc...) asparagine glycosylation sites follow: N196 and N228. Residues 242-262 (VLYFILETYVPSTFLVVLSWV) form a helical membrane-spanning segment. Residues 263-270 (SFWISLDS) lie on the Cytoplasmic side of the membrane. A helical membrane pass occupies residues 271–290 (VPARTCIGVTTVLSMTTLMI). Over 291 to 301 (GSRTSLPNTNC) the chain is Extracellular. Residues 302-322 (FIKAIDVYLGICFSFVFGALL) form a helical membrane-spanning segment. Over 323-419 (EYAVAHYSSL…NPSNVDRYSK (97 aa)) the chain is Cytoplasmic. A helical transmembrane segment spans residues 420-440 (LLFPLIFMLANVFYWAYYMYF).

Belongs to the ligand-gated ion channel (TC 1.A.9) family. Gamma-aminobutyric acid receptor (TC 1.A.9.5) subfamily. GABRP sub-subfamily. In terms of assembly, heteropentamer, formed by a combination of alpha (GABRA1-6), beta (GABRB1-3), gamma (GABRG1-3), delta (GABRD), epsilon (GABRE), rho (GABRR1-3), pi (GABRP) and theta (GABRQ) chains, each subunit exhibiting distinct physiological and pharmacological properties.

The protein resides in the cell membrane. Its subcellular location is the apical cell membrane. It catalyses the reaction chloride(in) = chloride(out). Functionally, pi subunit of the heteropentameric ligand-gated chloride channel gated by gamma-aminobutyric acid (GABA). GABA-gated chloride channels, also named GABA(A) receptors (GABAAR), consist of five subunits arranged around a central pore and contain GABA active binding site(s) located at the alpha and beta subunit interfaces. When activated by GABA, GABAARs selectively allow the flow of chloride anions across the cell membrane down their electrochemical gradient. Pi-containing GABAARs are mostly located in peripheral tissues. In the uterus, pi subunits modulate uterus contraction by altering the sensitivity of GABAARs to pregnanolone. In the lungs, pi-containing GABAARs contribute to pulmonary fluid transport via luminal secretion of chloride. In Bos taurus (Bovine), this protein is Gamma-aminobutyric acid receptor subunit pi (GABRP).